A 218-amino-acid chain; its full sequence is Hypoxanthine-guanine phosphoribosyltransferase (218 aa).

N-acetylalanine is present on alanine 2. A GMP-binding site is contributed by lysine 69. Residue lysine 103 is modified to N6-acetyllysine. Lysine 115 is covalently cross-linked (Glycyl lysine isopeptide (Lys-Gly) (interchain with G-Cter in SUMO1); alternate). A Glycyl lysine isopeptide (Lys-Gly) (interchain with G-Cter in SUMO2); alternate cross-link involves residue lysine 115. Residues 134–142 (EDIIDTGKT), lysine 166, 186–188 (KFV), and aspartate 194 each bind GMP. Residue aspartate 138 is the Proton acceptor of the active site. Position 142 is a phosphothreonine (threonine 142). Aspartate 194 is a binding site for Mg(2+).

It belongs to the purine/pyrimidine phosphoribosyltransferase family. Homotetramer. It depends on Mg(2+) as a cofactor.

The protein localises to the cytoplasm. It carries out the reaction IMP + diphosphate = hypoxanthine + 5-phospho-alpha-D-ribose 1-diphosphate. It catalyses the reaction GMP + diphosphate = guanine + 5-phospho-alpha-D-ribose 1-diphosphate. Its pathway is purine metabolism; IMP biosynthesis via salvage pathway; IMP from hypoxanthine: step 1/1. Functionally, converts guanine to guanosine monophosphate, and hypoxanthine to inosine monophosphate. Transfers the 5-phosphoribosyl group from 5-phosphoribosylpyrophosphate onto the purine. Plays a central role in the generation of purine nucleotides through the purine salvage pathway. The sequence is that of Hypoxanthine-guanine phosphoribosyltransferase (HPRT1) from Sus scrofa (Pig).